The sequence spans 413 residues: Chemotactic signal transduction system substrate-binding protein BasB (413 aa).

The signal sequence occupies residues 1–31 (MHSTTRREWLGAIGATAATGLAGCAGVGGAG).

The protein resides in the cell membrane. In terms of biological role, mediates chemotaxis towards five attractant amino acids (leucine, isoleucine, valine, methionine and cysteine). May function as a receptor that binds the amino acids and transduces a signal to BasT. Has probably no additional role in transport. The chain is Chemotactic signal transduction system substrate-binding protein BasB (basB) from Halobacterium salinarum (strain ATCC 29341 / DSM 671 / R1).